The chain runs to 290 residues: Light-independent protochlorophyllide reductase iron-sulfur ATP-binding protein (290 aa).

Residues 10-15 and Lys-39 each bind ATP; that span reads GIGKST. Residue Ser-14 participates in Mg(2+) binding. [4Fe-4S] cluster contacts are provided by Cys-95 and Cys-129. Residue 180-181 participates in ATP binding; it reads NR.

Belongs to the NifH/BchL/ChlL family. In terms of assembly, homodimer. Protochlorophyllide reductase is composed of three subunits; ChlL, ChlN and ChlB. [4Fe-4S] cluster serves as cofactor.

It localises to the plastid. The protein resides in the chloroplast. The catalysed reaction is chlorophyllide a + oxidized 2[4Fe-4S]-[ferredoxin] + 2 ADP + 2 phosphate = protochlorophyllide a + reduced 2[4Fe-4S]-[ferredoxin] + 2 ATP + 2 H2O. Its pathway is porphyrin-containing compound metabolism; chlorophyll biosynthesis (light-independent). In terms of biological role, component of the dark-operative protochlorophyllide reductase (DPOR) that uses Mg-ATP and reduced ferredoxin to reduce ring D of protochlorophyllide (Pchlide) to form chlorophyllide a (Chlide). This reaction is light-independent. The L component serves as a unique electron donor to the NB-component of the complex, and binds Mg-ATP. The chain is Light-independent protochlorophyllide reductase iron-sulfur ATP-binding protein from Chaetosphaeridium globosum (Charophycean green alga).